The sequence spans 757 residues: Cell cycle progression protein 1 (757 aa).

Topologically, residues 1–217 (MSENSSDSDS…KRQFSSGLNK (217 aa)) are cytoplasmic. The interaction with MCF2L and SRC stretch occupies residues 1-308 (MSENSSDSDS…QKTNLATENQ (308 aa)). Residues 152–207 (VFSSQPSDDESSSDETSNQPSPAFRRRRARKKTVSASESEDRLVAEQETEPSKELS) are disordered. The segment covering 175–184 (FRRRRARKKT) has biased composition (basic residues). Residue Ser-186 is modified to Phosphoserine. Residues 190-207 (SEDRLVAEQETEPSKELS) show a composition bias toward basic and acidic residues. Residues 218-238 (CVILALVIAISMGFGHFYGTI) traverse the membrane as a helical; Signal-anchor for type II membrane protein segment. Over 239 to 757 (QIQKRQQLVR…YIKPCHYSSL (519 aa)) the chain is Lumenal. Coiled-coil stretches lie at residues 248 to 272 (RKIHEDELNDMKDYLSQCQQEQESF) and 306 to 450 (ENQY…LWER). The span at 458–468 (QNGKQGTDGKK) shows a compositional bias: basic and acidic residues. Positions 458–483 (QNGKQGTDGKKKGGRGSHRAKNKSKE) are disordered. Residues 469-479 (KGGRGSHRAKN) are compositionally biased toward basic residues. Residues 504–530 (VRHHKEKIKQAKEAVKENLKKFSDSVK) adopt a coiled-coil conformation.

It belongs to the CCPG1 family. Interacts with MCF2L. May interact with MCF2, ARHGEF1, BCR, VAV1 and FGD1, but not with TIAM1. Interacts with GTP-bound CDC42 and SRC.

Its subcellular location is the cytoplasmic granule membrane. Functionally, acts as an assembly platform for Rho protein signaling complexes. Limits guanine nucleotide exchange activity of MCF2L toward RHOA, which results in an inhibition of both its transcriptional activation ability and its transforming activity. Does not inhibit activity of MCF2L toward CDC42, or activity of MCF2 toward either RHOA or CDC42. May be involved in cell cycle regulation. In Homo sapiens (Human), this protein is Cell cycle progression protein 1 (CCPG1).